A 316-amino-acid polypeptide reads, in one-letter code: Ribosomal protein L11 methyltransferase (316 aa).

S-adenosyl-L-methionine contacts are provided by Thr157, Gly178, Asp200, and Asn243.

The protein belongs to the methyltransferase superfamily. PrmA family.

The protein localises to the cytoplasm. It carries out the reaction L-lysyl-[protein] + 3 S-adenosyl-L-methionine = N(6),N(6),N(6)-trimethyl-L-lysyl-[protein] + 3 S-adenosyl-L-homocysteine + 3 H(+). Its function is as follows. Methylates ribosomal protein L11. The sequence is that of Ribosomal protein L11 methyltransferase from Streptococcus pneumoniae (strain JJA).